The primary structure comprises 319 residues: Exopolyphosphatase 2 (319 aa).

It belongs to the GppA/Ppx family. Homodimer.

It catalyses the reaction [phosphate](n) + H2O = [phosphate](n-1) + phosphate + H(+). With respect to regulation, exopolyphosphatase activity is inhibited by ppGpp alarmones produced during the bacterial stringent response. Its function is as follows. Degradation of inorganic polyphosphates (polyP). Releases orthophosphate processively from the ends of the polyP chain. Prefers long-chain length polyphosphates as substrates. In Mycobacterium tuberculosis (strain CDC 1551 / Oshkosh), this protein is Exopolyphosphatase 2.